A 251-amino-acid chain; its full sequence is Probable transcriptional regulatory protein Pmob_0807 (251 aa).

A disordered region spans residues 1 to 22 (MSGHNKWANIKHRKGAQDAKRS).

The protein belongs to the TACO1 family.

The protein localises to the cytoplasm. In Petrotoga mobilis (strain DSM 10674 / SJ95), this protein is Probable transcriptional regulatory protein Pmob_0807.